The sequence spans 146 residues: 3-hydroxyacyl-[acyl-carrier-protein] dehydratase FabZ (146 aa).

The active site involves His48.

The protein belongs to the thioester dehydratase family. FabZ subfamily.

It is found in the cytoplasm. The catalysed reaction is a (3R)-hydroxyacyl-[ACP] = a (2E)-enoyl-[ACP] + H2O. Functionally, involved in unsaturated fatty acids biosynthesis. Catalyzes the dehydration of short chain beta-hydroxyacyl-ACPs and long chain saturated and unsaturated beta-hydroxyacyl-ACPs. The chain is 3-hydroxyacyl-[acyl-carrier-protein] dehydratase FabZ from Campylobacter lari (strain RM2100 / D67 / ATCC BAA-1060).